Consider the following 100-residue polypeptide: NADH-quinone oxidoreductase subunit K (100 aa).

3 consecutive transmembrane segments (helical) span residues 4 to 24 (VTWYLWLAAMLFTIGLSGVLL), 29 to 49 (LIVMMSVELMLNAANLTFLAF), and 61 to 81 (IAFFVIAVAAAEAAVGLAVVI).

This sequence belongs to the complex I subunit 4L family. In terms of assembly, NDH-1 is composed of 14 different subunits. Subunits NuoA, H, J, K, L, M, N constitute the membrane sector of the complex.

Its subcellular location is the cell inner membrane. It carries out the reaction a quinone + NADH + 5 H(+)(in) = a quinol + NAD(+) + 4 H(+)(out). In terms of biological role, NDH-1 shuttles electrons from NADH, via FMN and iron-sulfur (Fe-S) centers, to quinones in the respiratory chain. The immediate electron acceptor for the enzyme in this species is believed to be ubiquinone. Couples the redox reaction to proton translocation (for every two electrons transferred, four hydrogen ions are translocated across the cytoplasmic membrane), and thus conserves the redox energy in a proton gradient. In Anaeromyxobacter sp. (strain Fw109-5), this protein is NADH-quinone oxidoreductase subunit K.